The sequence spans 239 residues: Ribosomal RNA small subunit methyltransferase G (239 aa).

S-adenosyl-L-methionine is bound by residues Gly-77, Phe-82, 128–129 (AE), and Arg-146. Residues 215 to 239 (DKKRQTPKKYPRKPGTPNKTPLLEK) form a disordered region.

It belongs to the methyltransferase superfamily. RNA methyltransferase RsmG family.

It is found in the cytoplasm. Its function is as follows. Specifically methylates the N7 position of guanine in position 535 of 16S rRNA. This is Ribosomal RNA small subunit methyltransferase G from Staphylococcus aureus (strain USA300).